The sequence spans 333 residues: MIIKQLPLTDLHRHLDGNIRIETILDLGQKFGLDLPAYDIEALRPHVQIVEAEPSLVAFLSKLDWGVAVLGDLDACRRVAYENVQDAMNAQIDYAELRFSPYYMAMKHNLPIAGVVEAVVDGVEAGCRDFGIKANLIGIMSRTFGQDACQQELDGLLTQKHKLVAIDLAGDELGQPGDLFVNHFKQVKDADLRVTVHAGEAAGAASMWQAINELGAVRIGHGVKAIEDPKLMEYLAKNNIGIESCLTSNIQTSTVASFESHPIKTFLDYGVKVCLNTDDPAVEGIELPHEYEVAAPKVGLTPEQLKQIQINGLDLAFLSDSEKQALREMAAKR.

Residues H12 and H14 each coordinate Zn(2+). Substrate contacts are provided by H14, D16, and G170. H197 provides a ligand contact to Zn(2+). E200 functions as the Proton donor in the catalytic mechanism. A Zn(2+)-binding site is contributed by D278. Residue D279 participates in substrate binding.

Belongs to the metallo-dependent hydrolases superfamily. Adenosine and AMP deaminases family. Adenosine deaminase subfamily. Requires Zn(2+) as cofactor.

The catalysed reaction is adenosine + H2O + H(+) = inosine + NH4(+). The enzyme catalyses 2'-deoxyadenosine + H2O + H(+) = 2'-deoxyinosine + NH4(+). Functionally, catalyzes the hydrolytic deamination of adenosine and 2-deoxyadenosine. This Aliivibrio fischeri (strain ATCC 700601 / ES114) (Vibrio fischeri) protein is Adenosine deaminase.